A 343-amino-acid polypeptide reads, in one-letter code: Phosphate acyltransferase (343 aa).

It belongs to the PlsX family. In terms of assembly, homodimer. Probably interacts with PlsY.

The protein localises to the cytoplasm. It catalyses the reaction a fatty acyl-[ACP] + phosphate = an acyl phosphate + holo-[ACP]. Its pathway is lipid metabolism; phospholipid metabolism. Catalyzes the reversible formation of acyl-phosphate (acyl-PO(4)) from acyl-[acyl-carrier-protein] (acyl-ACP). This enzyme utilizes acyl-ACP as fatty acyl donor, but not acyl-CoA. This Coxiella burnetii (strain Dugway 5J108-111) protein is Phosphate acyltransferase.